The primary structure comprises 686 residues: NADH-ubiquinone oxidoreductase chain 5 (686 aa).

The next 17 membrane-spanning stretches (helical) occupy residues 3 to 23 (LIIL…GRFV), 40 to 60 (ALLS…LFSF), 101 to 121 (ITLP…LFSV), 139 to 159 (LFTF…LFVG), 160 to 180 (WEGI…RIQA), 198 to 218 (LSIA…STVF), 222 to 242 (AYIN…GAMA), 261 to 281 (TPVS…YLLI), 293 to 313 (VLLV…TCGL), 321 to 341 (IIAF…GLSQ), 350 to 370 (LFHA…IHAF), 382 to 402 (LINF…SLLA), 432 to 452 (ILGS…ISLV), 472 to 492 (ITVI…GYVT), 526 to 546 (LIFK…ALYL), 635 to 655 (ALYI…PMLV), and 665 to 685 (LIIL…KKLS).

Belongs to the complex I subunit 5 family.

It is found in the mitochondrion inner membrane. It catalyses the reaction a ubiquinone + NADH + 5 H(+)(in) = a ubiquinol + NAD(+) + 4 H(+)(out). Functionally, core subunit of the mitochondrial membrane respiratory chain NADH dehydrogenase (Complex I) that is believed to belong to the minimal assembly required for catalysis. Complex I functions in the transfer of electrons from NADH to the respiratory chain. The immediate electron acceptor for the enzyme is believed to be ubiquinone. The protein is NADH-ubiquinone oxidoreductase chain 5 (ND5) of Schizophyllum commune (Split gill fungus).